Here is a 761-residue protein sequence, read N- to C-terminus: Isocyanide synthase xanB (761 aa).

Residues 24-128 (LLGSYETKAP…GKGTKADPSH (105 aa)) form a disordered region. The span at 36–48 (ETSEIAASSSSSE) shows a compositional bias: low complexity. Over residues 93–102 (TVSTPQSSDN) the composition is skewed to polar residues. Residues 115 to 126 (FKDEGKGTKADP) are compositionally biased toward basic and acidic residues.

Belongs to the isocyanide synthase family.

It functions in the pathway secondary metabolite biosynthesis. Functionally, isocyanide synthase; part of the gene cluster that mediates the biosynthesis of the isocyanide xanthocillin and its derivatives. The first step of the pathway consists in the conversion of tyrosine into a vinyl-isonitrile intermediate by the isocyanide synthase xanB. Subsequent oxidative dimerization of this intermediate to form xanthocillin may involve the cytochrome P450 monooxygenase xanG, whose expression is coregulated with that of XanB. Xanthocillin can be further modified by the isonitrile hydratase-like protein xanA which introduces N-formyl groups and the methyltransferase xanE which introduces methyl groups, leading to the production of several derivatives including fumiformamide. Finally, fumiformamide can be subject to both oxidative and reductive cyclization to yield melanocins E and F, respectively. The sequence is that of Isocyanide synthase xanB from Aspergillus fumigatus (strain ATCC MYA-4609 / CBS 101355 / FGSC A1100 / Af293) (Neosartorya fumigata).